The chain runs to 29 residues: Kappa-theraphotoxin-Ps1a (29 aa).

3 cysteine pairs are disulfide-bonded: C2/C16, C9/C21, and C15/C25. An Isoleucine amide modification is found at I29.

Belongs to the neurotoxin 30 (phrixotoxin) family. As to expression, expressed by the venom gland.

It localises to the secreted. In terms of biological role, potent and specific blocker of Kv4.2/KCND2 (IC(50)=5 nM) and Kv4.3/KCND3 (IC(50)=28 nM) potassium channels. Acts by altering the gating properties of these channels. Also shows moderate inhibition on human voltage-gated sodium channel Nav1.7/SCN9A activation (IC(50)=423 nM). The protein is Kappa-theraphotoxin-Ps1a of Paraphysa scrofa (Chilean copper tarantula).